A 171-amino-acid polypeptide reads, in one-letter code: Ponticulin-like protein F (171 aa).

A signal peptide spans 1 to 20 (MKFIPALIIFVFTIFALTNS). G149 is lipidated: GPI-like-anchor amidated glycine. Positions 150 to 171 (TSSTIVIPFALILSLLLSVITL) are cleaved as a propeptide — removed in mature form.

This sequence belongs to the ponticulin family. The GPI-like-anchor contains a phosphoceramide group, rather than a phosphatidyl group.

The protein resides in the cell membrane. The protein is Ponticulin-like protein F (ponF) of Dictyostelium discoideum (Social amoeba).